We begin with the raw amino-acid sequence, 192 residues long: Large ribosomal subunit protein uL6 (192 aa).

This sequence belongs to the universal ribosomal protein uL6 family. Component of the large ribosomal subunit.

Its subcellular location is the cytoplasm. Functionally, component of the large ribosomal subunit. The ribosome is a large ribonucleoprotein complex responsible for the synthesis of proteins in the cell. This is Large ribosomal subunit protein uL6 (rpl9) from Ictalurus punctatus (Channel catfish).